The sequence spans 89 residues: Large ribosomal subunit protein bL27 (89 aa).

The tract at residues 1-22 is disordered; sequence MAHKKAGGSSRNGRDSESKRLG.

It belongs to the bacterial ribosomal protein bL27 family.

This is Large ribosomal subunit protein bL27 from Rhizobium etli (strain CIAT 652).